The following is a 152-amino-acid chain: uncharacterized protein (152 aa).

This sequence belongs to the antirestriction protein family.

This is an uncharacterized protein from Escherichia coli (strain K12).